The following is a 73-amino-acid chain: Antimicrobial peptide 143 (73 aa).

Positions Met1 to Ala22 are cleaved as a signal peptide. The residue at position 38 (Lys38) is a Lysine amide. The propeptide occupies Glu44–Tyr73.

Belongs to the non-disulfide-bridged peptide (NDBP) superfamily. Short antimicrobial peptide (group 4) family. Expressed by the venom gland.

It is found in the secreted. It localises to the target cell membrane. Functionally, cationic host defense peptide that have antibacterial activity by breaking membranes. Is more effective on Gram-positive than on Gram-negative bacteria. The chain is Antimicrobial peptide 143 from Lychas mucronatus (Chinese swimming scorpion).